The sequence spans 910 residues: Dynein axonemal assembly factor 1 homolog (910 aa).

LRR repeat units follow at residues 43-64 (GLKC…DHQS), 65-86 (QLRC…QHCK), 87-108 (QLDT…GSDI), 111-132 (VLNT…AELR), and 136-157 (FVSV…KVLA). Residues 171–209 (PVVNDIPSYRKTLILECKSLTYLDSRPVFDKDRACAEAW) form the LRRCT domain. Residues 217-230 (ERKEHQRWKKEEQR) show a composition bias toward basic and acidic residues. 6 disordered regions span residues 217–275 (ERKE…GDFE), 297–332 (TKGD…DPTL), 344–399 (SRAC…GSIL), 620–642 (EQVP…PVDQ), 662–682 (QVEV…IPEE), and 855–910 (EELE…QGDH). Residues 314–331 (STNSVDYITGSDSNSDPT) are compositionally biased toward polar residues. A compositionally biased stretch (low complexity) spans 380–389 (SLSDSSSSSS). Over residues 620 to 633 (EQVPDEVEANDKAS) the composition is skewed to basic and acidic residues. Residues 855–865 (EELEELNEEED) show a composition bias toward acidic residues. Residues 866-878 (PALKEAGDFKHDE) are compositionally biased toward basic and acidic residues.

It belongs to the DNAAF1 family.

Its subcellular location is the cell projection. The protein localises to the cilium. Functionally, cilium-specific protein required for cilia structures. The polypeptide is Dynein axonemal assembly factor 1 homolog (Anopheles gambiae (African malaria mosquito)).